Consider the following 437-residue polypeptide: Vacuolar protein sorting-associated protein 4A (437 aa).

The tract at residues 1–84 (MTTSTLQKAI…RSKEKHGKKP (84 aa)) is interaction with CHMP1B. Residues 2–80 (TTSTLQKAID…KDYLRSKEKH (79 aa)) enclose the MIT domain. Lysine 8 carries the post-translational modification N6-acetyllysine. The interval 75 to 106 (RSKEKHGKKPVKENQSEGKGSDSDSEGDNPEK) is disordered. Basic and acidic residues predominate over residues 84–96 (PVKENQSEGKGSD). Phosphoserine occurs at positions 95 and 97. 167–174 (GPPGTGKS) provides a ligand contact to ATP.

The protein belongs to the AAA ATPase family. Proposed to be monomeric or homodimeric in nucleotide-free form and to oligomerize upon binding to ATP to form two stacked hexameric or heptameric rings with a central pore through which ESCRT-III substrates are translocated in an ATP-dependent manner. Interacts with CHMP1A, CHMP1B, CHMP2A, CHMP2B, CHMP3, CHMP4A, CHMP4B, CHMP4C and CHMP6. Interacts with VPS4B; the interaction suggests a heteromeric assembly with VPS4B. Interacts with SPAST. Interacts with IST1. Interacts with ZFYVE19/ANCHR; leading to retain it at midbody. Ubiquitously expressed.

The protein localises to the late endosome membrane. It localises to the midbody. The protein resides in the cytoplasm. It is found in the cytoskeleton. Its subcellular location is the spindle. The enzyme catalyses ATP + H2O = ADP + phosphate + H(+). Its function is as follows. Involved in late steps of the endosomal multivesicular bodies (MVB) pathway. Recognizes membrane-associated ESCRT-III assemblies and catalyzes their disassembly, possibly in combination with membrane fission. Redistributes the ESCRT-III components to the cytoplasm for further rounds of MVB sorting. MVBs contain intraluminal vesicles (ILVs) that are generated by invagination and scission from the limiting membrane of the endosome and mostly are delivered to lysosomes enabling degradation of membrane proteins, such as stimulated growth factor receptors, lysosomal enzymes and lipids. It is required for proper accomplishment of various processes including the regulation of endosome size, primary cilium organization, mitotic spindle organization, chromosome segregation, and nuclear envelope sealing and spindle disassembly during anaphase. Involved in cytokinesis: retained at the midbody by ZFYVE19/ANCHR and CHMP4C until abscission checkpoint signaling is terminated at late cytokinesis. It is then released following dephosphorylation of CHMP4C, leading to abscission. VPS4A/B are required for the exosomal release of SDCBP, CD63 and syndecan. Critical for normal erythroblast cytokinesis and correct erythropoiesis. (Microbial infection) In conjunction with the ESCRT machinery also appears to function in topologically equivalent membrane fission events, such as the terminal stages of cytokinesis and enveloped virus budding (HIV-1 and other lentiviruses). The protein is Vacuolar protein sorting-associated protein 4A of Homo sapiens (Human).